Reading from the N-terminus, the 219-residue chain is Ribose-5-phosphate isomerase A (219 aa).

Residues 28–31 (SGST), 81–84 (DGAD), and 94–97 (KGGG) each bind substrate. E103 (proton acceptor) is an active-site residue. Residue K121 participates in substrate binding.

The protein belongs to the ribose 5-phosphate isomerase family. Homodimer.

The catalysed reaction is aldehydo-D-ribose 5-phosphate = D-ribulose 5-phosphate. It functions in the pathway carbohydrate degradation; pentose phosphate pathway; D-ribose 5-phosphate from D-ribulose 5-phosphate (non-oxidative stage): step 1/1. Catalyzes the reversible conversion of ribose-5-phosphate to ribulose 5-phosphate. This Actinobacillus succinogenes (strain ATCC 55618 / DSM 22257 / CCUG 43843 / 130Z) protein is Ribose-5-phosphate isomerase A.